The sequence spans 271 residues: Pyrroline-5-carboxylate reductase (271 aa).

This sequence belongs to the pyrroline-5-carboxylate reductase family.

It is found in the cytoplasm. It catalyses the reaction L-proline + NADP(+) = (S)-1-pyrroline-5-carboxylate + NADPH + 2 H(+). The enzyme catalyses L-proline + NAD(+) = (S)-1-pyrroline-5-carboxylate + NADH + 2 H(+). It participates in amino-acid biosynthesis; L-proline biosynthesis; L-proline from L-glutamate 5-semialdehyde: step 1/1. Its function is as follows. Catalyzes the reduction of 1-pyrroline-5-carboxylate (PCA) to L-proline. This is Pyrroline-5-carboxylate reductase from Haemophilus influenzae (strain ATCC 51907 / DSM 11121 / KW20 / Rd).